The primary structure comprises 433 residues: Zinc finger and SCAN domain-containing protein 4 (433 aa).

Positions 44 to 126 constitute an SCAN box domain; that stretch reads RMVLNSFQDS…RFMEDLTDDS (83 aa). Polar residues-rich tracts occupy residues 162–184 and 277–298; these read SAQT…TSLE and QPEQ…NSTC. Disordered regions lie at residues 162–199 and 272–298; these read SAQT…CNSS and AGCI…NSTC. C2H2-type zinc fingers lie at residues 312-334, 340-362, 368-390, and 396-418; these read YKCE…QRRH, FVCP…QIIH, FTCS…ERIH, and YTCP…MRTH. A disordered region spans residues 414-433; it reads HMRTHEKITPPSVPSTPEAS.

The protein localises to the nucleus. It localises to the chromosome. It is found in the telomere. In terms of biological role, embryonic stem (ES) cell-specific transcription factor required to regulate ES cell pluripotency. Binds telomeres and plays a key role in genomic stability in ES cells by regulating telomere elongation. Acts as an activator of spontaneous telomere sister chromatid exchange (T-SCE) and telomere elongation in undifferentiated ES cells. The chain is Zinc finger and SCAN domain-containing protein 4 (ZSCAN4) from Pongo pygmaeus (Bornean orangutan).